The sequence spans 136 residues: Large ribosomal subunit protein uL16 (136 aa).

The protein belongs to the universal ribosomal protein uL16 family. Part of the 50S ribosomal subunit.

In terms of biological role, binds 23S rRNA and is also seen to make contacts with the A and possibly P site tRNAs. This Enterobacter sp. (strain 638) protein is Large ribosomal subunit protein uL16.